Consider the following 259-residue polypeptide: Major cell-binding factor (259 aa).

A signal peptide spans 1–26 (MVFRKSLLKLAVFALGACVAFSNANA).

This sequence belongs to the bacterial solute-binding protein 3 family.

It localises to the cell surface. Functionally, common antigen and a major cell adherence molecule. Most probably involved, with PEB1C, in a binding-protein-dependent transport system for an amino acid. May be involved in binding to intestinal cells. This chain is Major cell-binding factor (peb1A), found in Campylobacter jejuni subsp. jejuni serotype O:2 (strain ATCC 700819 / NCTC 11168).